The chain runs to 147 residues: Putative pre-16S rRNA nuclease (147 aa).

This sequence belongs to the YqgF nuclease family.

Its subcellular location is the cytoplasm. Could be a nuclease involved in processing of the 5'-end of pre-16S rRNA. This is Putative pre-16S rRNA nuclease from Ligilactobacillus salivarius (strain UCC118) (Lactobacillus salivarius).